Consider the following 264-residue polypeptide: Acetylglutamate kinase (264 aa).

Substrate is bound by residues 50–51 (GG), Arg72, and Asn164.

This sequence belongs to the acetylglutamate kinase family. ArgB subfamily.

The protein localises to the cytoplasm. The catalysed reaction is N-acetyl-L-glutamate + ATP = N-acetyl-L-glutamyl 5-phosphate + ADP. The protein operates within amino-acid biosynthesis; L-arginine biosynthesis; N(2)-acetyl-L-ornithine from L-glutamate: step 2/4. In terms of biological role, catalyzes the ATP-dependent phosphorylation of N-acetyl-L-glutamate. The protein is Acetylglutamate kinase of Moritella profunda.